Here is a 1520-residue protein sequence, read N- to C-terminus: Accessory colonization factor AcfD (1520 aa).

The N-terminal stretch at 1-16 (MKIRIVSLIVLGFLIG) is a signal peptide. A lipid anchor (N-palmitoyl cysteine) is attached at Cys17. Residue Cys17 is the site of S-diacylglycerol cysteine attachment. The 304-residue stretch at 1085–1388 (GNRQPTGQWA…MFAQLKEWAE (304 aa)) folds into the Peptidase M60 domain.

The protein resides in the cell membrane. This Vibrio cholerae serotype O1 (strain ATCC 39315 / El Tor Inaba N16961) protein is Accessory colonization factor AcfD (acfD).